The primary structure comprises 469 residues: Adenosylhomocysteinase (469 aa).

Residues Thr-60, Asp-135, and Glu-195 each contribute to the substrate site. 196–198 is a binding site for NAD(+); the sequence is TTT. The substrate site is built by Lys-225 and Asp-229. NAD(+) contacts are provided by residues Asn-230, 259-264, Glu-282, Asn-317, 338-340, and Asn-383; these read GYGDVG and IGH.

The protein belongs to the adenosylhomocysteinase family. NAD(+) serves as cofactor.

It localises to the cytoplasm. The enzyme catalyses S-adenosyl-L-homocysteine + H2O = L-homocysteine + adenosine. It participates in amino-acid biosynthesis; L-homocysteine biosynthesis; L-homocysteine from S-adenosyl-L-homocysteine: step 1/1. May play a key role in the regulation of the intracellular concentration of adenosylhomocysteine. The polypeptide is Adenosylhomocysteinase (Maricaulis maris (strain MCS10) (Caulobacter maris)).